Reading from the N-terminus, the 156-residue chain is ATP synthase subunit b (156 aa).

A helical membrane pass occupies residues 7-27 (LIGQTVAFIIFVWFCMKFVWP).

It belongs to the ATPase B chain family. In terms of assembly, F-type ATPases have 2 components, F(1) - the catalytic core - and F(0) - the membrane proton channel. F(1) has five subunits: alpha(3), beta(3), gamma(1), delta(1), epsilon(1). F(0) has three main subunits: a(1), b(2) and c(10-14). The alpha and beta chains form an alternating ring which encloses part of the gamma chain. F(1) is attached to F(0) by a central stalk formed by the gamma and epsilon chains, while a peripheral stalk is formed by the delta and b chains.

It is found in the cell inner membrane. Its function is as follows. F(1)F(0) ATP synthase produces ATP from ADP in the presence of a proton or sodium gradient. F-type ATPases consist of two structural domains, F(1) containing the extramembraneous catalytic core and F(0) containing the membrane proton channel, linked together by a central stalk and a peripheral stalk. During catalysis, ATP synthesis in the catalytic domain of F(1) is coupled via a rotary mechanism of the central stalk subunits to proton translocation. In terms of biological role, component of the F(0) channel, it forms part of the peripheral stalk, linking F(1) to F(0). This chain is ATP synthase subunit b, found in Shewanella baltica (strain OS185).